A 336-amino-acid chain; its full sequence is Phosphate acyltransferase (336 aa).

The protein belongs to the PlsX family. Homodimer. Probably interacts with PlsY.

It localises to the cytoplasm. It catalyses the reaction a fatty acyl-[ACP] + phosphate = an acyl phosphate + holo-[ACP]. The protein operates within lipid metabolism; phospholipid metabolism. Its function is as follows. Catalyzes the reversible formation of acyl-phosphate (acyl-PO(4)) from acyl-[acyl-carrier-protein] (acyl-ACP). This enzyme utilizes acyl-ACP as fatty acyl donor, but not acyl-CoA. This Dictyoglomus thermophilum (strain ATCC 35947 / DSM 3960 / H-6-12) protein is Phosphate acyltransferase.